The following is a 270-amino-acid chain: Formamidopyrimidine-DNA glycosylase (270 aa).

Proline 2 acts as the Schiff-base intermediate with DNA in catalysis. The Proton donor role is filled by glutamate 3. Catalysis depends on lysine 59, which acts as the Proton donor; for beta-elimination activity. The DNA site is built by histidine 91, arginine 110, and lysine 151. Residues arginine 236–lysine 270 form an FPG-type zinc finger. Catalysis depends on arginine 260, which acts as the Proton donor; for delta-elimination activity.

Belongs to the FPG family. Monomer. It depends on Zn(2+) as a cofactor.

The enzyme catalyses Hydrolysis of DNA containing ring-opened 7-methylguanine residues, releasing 2,6-diamino-4-hydroxy-5-(N-methyl)formamidopyrimidine.. It carries out the reaction 2'-deoxyribonucleotide-(2'-deoxyribose 5'-phosphate)-2'-deoxyribonucleotide-DNA = a 3'-end 2'-deoxyribonucleotide-(2,3-dehydro-2,3-deoxyribose 5'-phosphate)-DNA + a 5'-end 5'-phospho-2'-deoxyribonucleoside-DNA + H(+). Its function is as follows. Involved in base excision repair of DNA damaged by oxidation or by mutagenic agents. Acts as a DNA glycosylase that recognizes and removes damaged bases. Has a preference for oxidized purines, such as 7,8-dihydro-8-oxoguanine (8-oxoG). Has AP (apurinic/apyrimidinic) lyase activity and introduces nicks in the DNA strand. Cleaves the DNA backbone by beta-delta elimination to generate a single-strand break at the site of the removed base with both 3'- and 5'-phosphates. The chain is Formamidopyrimidine-DNA glycosylase from Bdellovibrio bacteriovorus (strain ATCC 15356 / DSM 50701 / NCIMB 9529 / HD100).